The following is a 203-amino-acid chain: Superoxide dismutase [Mn/Fe] (203 aa).

H27, H81, D163, and H167 together coordinate Fe(3+). The Mn(2+) site is built by H27, H81, D163, and H167.

It belongs to the iron/manganese superoxide dismutase family. Mn(2+) is required as a cofactor. The cofactor is Fe(3+).

It carries out the reaction 2 superoxide + 2 H(+) = H2O2 + O2. Destroys superoxide anion radicals which are normally produced within the cells and which are toxic to biological systems. Catalyzes the dismutation of superoxide anion radicals into O2 and H2O2 by successive reduction and oxidation of the transition metal ion at the active site. The protein is Superoxide dismutase [Mn/Fe] (sodA) of Streptococcus mutans serotype c (strain ATCC 700610 / UA159).